A 267-amino-acid polypeptide reads, in one-letter code: Regulatory protein VirG (267 aa).

Residues His-29–Leu-143 enclose the Response regulatory domain. 4-aspartylphosphate is present on Asp-78. The ompR/PhoB-type DNA-binding region spans Arg-155–Ala-255.

Post-translationally, phosphorylated by wide host range (WHR) VirA protein.

It localises to the cytoplasm. VirG is required for the positive regulation of at least two vir loci encoded by the Ti plasmid of A.tumefaciens. The polypeptide is Regulatory protein VirG (virG) (Rhizobium radiobacter (Agrobacterium tumefaciens)).